Consider the following 441-residue polypeptide: Ribulose bisphosphate carboxylase large chain (441 aa).

The residue at position 5 (Lys5) is an N6,N6,N6-trimethyllysine. Thr164 serves as a coordination point for substrate. Lys166 functions as the Proton acceptor in the catalytic mechanism. A substrate-binding site is contributed by Lys168. Mg(2+)-binding residues include Lys192, Asp194, and Glu195. Lys192 carries the post-translational modification N6-carboxylysine. His285 (proton acceptor) is an active-site residue. Positions 286, 318, and 370 each coordinate substrate.

It belongs to the RuBisCO large chain family. Type I subfamily. In terms of assembly, heterohexadecamer of 8 large chains and 8 small chains; disulfide-linked. The disulfide link is formed within the large subunit homodimers. Mg(2+) is required as a cofactor. Post-translationally, the disulfide bond which can form in the large chain dimeric partners within the hexadecamer appears to be associated with oxidative stress and protein turnover.

It localises to the plastid. Its subcellular location is the chloroplast. The catalysed reaction is 2 (2R)-3-phosphoglycerate + 2 H(+) = D-ribulose 1,5-bisphosphate + CO2 + H2O. It carries out the reaction D-ribulose 1,5-bisphosphate + O2 = 2-phosphoglycolate + (2R)-3-phosphoglycerate + 2 H(+). Functionally, ruBisCO catalyzes two reactions: the carboxylation of D-ribulose 1,5-bisphosphate, the primary event in carbon dioxide fixation, as well as the oxidative fragmentation of the pentose substrate in the photorespiration process. Both reactions occur simultaneously and in competition at the same active site. This is Ribulose bisphosphate carboxylase large chain from Hemionitis engywookii (Fendler's false cloak fern).